The following is a 96-amino-acid chain: Glutamyl-tRNA(Gln) amidotransferase subunit C (96 aa).

It belongs to the GatC family. In terms of assembly, heterotrimer of A, B and C subunits.

The catalysed reaction is L-glutamyl-tRNA(Gln) + L-glutamine + ATP + H2O = L-glutaminyl-tRNA(Gln) + L-glutamate + ADP + phosphate + H(+). The enzyme catalyses L-aspartyl-tRNA(Asn) + L-glutamine + ATP + H2O = L-asparaginyl-tRNA(Asn) + L-glutamate + ADP + phosphate + 2 H(+). Functionally, allows the formation of correctly charged Asn-tRNA(Asn) or Gln-tRNA(Gln) through the transamidation of misacylated Asp-tRNA(Asn) or Glu-tRNA(Gln) in organisms which lack either or both of asparaginyl-tRNA or glutaminyl-tRNA synthetases. The reaction takes place in the presence of glutamine and ATP through an activated phospho-Asp-tRNA(Asn) or phospho-Glu-tRNA(Gln). The polypeptide is Glutamyl-tRNA(Gln) amidotransferase subunit C (Pseudomonas aeruginosa (strain ATCC 15692 / DSM 22644 / CIP 104116 / JCM 14847 / LMG 12228 / 1C / PRS 101 / PAO1)).